Consider the following 186-residue polypeptide: Protein GrpE (186 aa).

Over residues 1–13 (MSENTQPEQNQPL) the composition is skewed to polar residues. A disordered region spans residues 1 to 22 (MSENTQPEQNQPLTGAPSPEEL).

It belongs to the GrpE family. In terms of assembly, homodimer.

It is found in the cytoplasm. Its function is as follows. Participates actively in the response to hyperosmotic and heat shock by preventing the aggregation of stress-denatured proteins, in association with DnaK and GrpE. It is the nucleotide exchange factor for DnaK and may function as a thermosensor. Unfolded proteins bind initially to DnaJ; upon interaction with the DnaJ-bound protein, DnaK hydrolyzes its bound ATP, resulting in the formation of a stable complex. GrpE releases ADP from DnaK; ATP binding to DnaK triggers the release of the substrate protein, thus completing the reaction cycle. Several rounds of ATP-dependent interactions between DnaJ, DnaK and GrpE are required for fully efficient folding. This is Protein GrpE from Polaromonas sp. (strain JS666 / ATCC BAA-500).